The sequence spans 334 residues: Thiamine-binding periplasmic protein (334 aa).

Positions 1–23 (MRLLSLLTFSLFAVIGLAPAAQA) are cleaved as a signal peptide. Thiamine is bound by residues 64–65 (DG), 166–167 (AT), Trp-202, and 220–223 (YTTS).

This sequence belongs to the bacterial solute-binding protein 1 family. In terms of assembly, the complex is composed of two ATP-binding proteins (ThiQ), two transmembrane proteins (ThiP) and a solute-binding protein (ThiB).

The protein localises to the periplasm. In terms of biological role, part of the ABC transporter complex ThiBPQ involved in thiamine import. The protein is Thiamine-binding periplasmic protein (thiB) of Brucella abortus biovar 1 (strain 9-941).